Reading from the N-terminus, the 252-residue chain is Probable transcriptional regulatory protein Moth_1704 (252 aa).

It belongs to the TACO1 family.

The protein localises to the cytoplasm. This is Probable transcriptional regulatory protein Moth_1704 from Moorella thermoacetica (strain ATCC 39073 / JCM 9320).